The sequence spans 625 residues: Interleukin-1 receptor-associated kinase-like 2 (625 aa).

In terms of domain architecture, Death spans 13-94 (LDDLCRNMDA…RAAQIILNWK (82 aa)). The disordered stretch occupies residues 111–181 (KPEKPLAASV…SSDSKDFSTS (71 aa)). Ser-144 carries the phosphoserine modification. Over residues 169–181 (LPTSSDSKDFSTS) the composition is skewed to polar residues. The Protein kinase domain occupies 210–489 (FNQNRKISQG…LCLRRRNTSL (280 aa)). ATP is bound by residues 216–224 (ISQGTFADV), Lys-237, and 337–340 (KSSN). The tract at residues 510–540 (LPWSGLSEGTGSSSNTPEETDDVDNSSLDAS) is disordered. The span at 516 to 526 (SEGTGSSSNTP) shows a compositional bias: polar residues.

It belongs to the protein kinase superfamily. TKL Ser/Thr protein kinase family. Pelle subfamily. As to quaternary structure, interacts with MYD88. IL-1 stimulation leads to the formation of a signaling complex which dissociates from the IL-1 receptor following the binding of PELI1. In terms of tissue distribution, expressed in spleen, thymus, prostate, lung, liver, skeletal muscle, kidney, pancreas and peripheral blood leukocytes.

In terms of biological role, binds to the IL-1 type I receptor following IL-1 engagement, triggering intracellular signaling cascades leading to transcriptional up-regulation and mRNA stabilization. The protein is Interleukin-1 receptor-associated kinase-like 2 (IRAK2) of Homo sapiens (Human).